The chain runs to 239 residues: Purine nucleoside phosphorylase DeoD-type (239 aa).

H5 contacts a purine D-ribonucleoside. Phosphate contacts are provided by residues G21, R25, R44, and 88–91; that span reads RVGS. A purine D-ribonucleoside-binding positions include 180-182 and 204-205; these read EME and SD. Catalysis depends on D205, which acts as the Proton donor.

It belongs to the PNP/UDP phosphorylase family. As to quaternary structure, homohexamer; trimer of homodimers.

It carries out the reaction a purine D-ribonucleoside + phosphate = a purine nucleobase + alpha-D-ribose 1-phosphate. The catalysed reaction is a purine 2'-deoxy-D-ribonucleoside + phosphate = a purine nucleobase + 2-deoxy-alpha-D-ribose 1-phosphate. Catalyzes the reversible phosphorolytic breakdown of the N-glycosidic bond in the beta-(deoxy)ribonucleoside molecules, with the formation of the corresponding free purine bases and pentose-1-phosphate. This is Purine nucleoside phosphorylase DeoD-type from Pectobacterium atrosepticum (strain SCRI 1043 / ATCC BAA-672) (Erwinia carotovora subsp. atroseptica).